Reading from the N-terminus, the 556-residue chain is 2-succinyl-5-enolpyruvyl-6-hydroxy-3-cyclohexene-1-carboxylate synthase (556 aa).

The protein belongs to the TPP enzyme family. MenD subfamily. In terms of assembly, homodimer. Mg(2+) serves as cofactor. The cofactor is Mn(2+). Requires thiamine diphosphate as cofactor.

The catalysed reaction is isochorismate + 2-oxoglutarate + H(+) = 5-enolpyruvoyl-6-hydroxy-2-succinyl-cyclohex-3-ene-1-carboxylate + CO2. Its pathway is quinol/quinone metabolism; 1,4-dihydroxy-2-naphthoate biosynthesis; 1,4-dihydroxy-2-naphthoate from chorismate: step 2/7. The protein operates within quinol/quinone metabolism; menaquinone biosynthesis. Catalyzes the thiamine diphosphate-dependent decarboxylation of 2-oxoglutarate and the subsequent addition of the resulting succinic semialdehyde-thiamine pyrophosphate anion to isochorismate to yield 2-succinyl-5-enolpyruvyl-6-hydroxy-3-cyclohexene-1-carboxylate (SEPHCHC). The polypeptide is 2-succinyl-5-enolpyruvyl-6-hydroxy-3-cyclohexene-1-carboxylate synthase (Salmonella heidelberg (strain SL476)).